We begin with the raw amino-acid sequence, 956 residues long: Kinesin heavy chain isoform 5C (956 aa).

Residues 8–327 (SIKVMCRFRP…LMFGQRAKTI (320 aa)) form the Kinesin motor domain. Positions 87, 89, 90, 91, 92, 93, 94, and 99 each coordinate ATP. Positions 174–315 (VSSPEEVMDV…PSVFNEAETK (142 aa)) are microtubule-binding. T403 is modified (phosphothreonine). Positions 406–923 (VDGISAEKEK…RRAHSAQIAK (518 aa)) form a coiled coil. A globular region spans residues 859 to 956 (CELPKLEKRL…GSSNSTHYQK (98 aa)). The interval 910–956 (KNMARRAHSAQIAKPIRPGHYPASSPTAVHAVRGGGGGSSNSTHYQK) is disordered.

Belongs to the TRAFAC class myosin-kinesin ATPase superfamily. Kinesin family. Kinesin subfamily. Oligomer composed of two heavy chains and two light chains. Interacts with GRIP1. Interacts with KLC3 and TRAK1. Interacts with ZFYVE27.

Its subcellular location is the cytoplasm. The protein localises to the cytoskeleton. It is found in the cell projection. It localises to the dendrite. The enzyme catalyses ATP + H2O = ADP + phosphate + H(+). In terms of biological role, microtubule-associated force-producing protein that may play a role in organelle transport. Has ATPase activity. Involved in synaptic transmission. Mediates dendritic trafficking of mRNAs. Required for anterograde axonal transportation of MAPK8IP3/JIP3 which is essential for MAPK8IP3/JIP3 function in axon elongation. The sequence is that of Kinesin heavy chain isoform 5C (Kif5c) from Mus musculus (Mouse).